The primary structure comprises 281 residues: L-ornithine N(alpha)-acyltransferase (281 aa).

Belongs to the acetyltransferase family. OlsB subfamily.

It catalyses the reaction a (3R)-hydroxyacyl-[ACP] + L-ornithine = a lyso-ornithine lipid + holo-[ACP] + H(+). The protein operates within lipid metabolism. In terms of biological role, catalyzes the first step in the biosynthesis of ornithine lipids, which are phosphorus-free membrane lipids. Catalyzes the 3-hydroxyacyl-acyl carrier protein-dependent acylation of ornithine to form lyso-ornithine lipid (LOL). The chain is L-ornithine N(alpha)-acyltransferase from Brucella abortus (strain 2308).